Reading from the N-terminus, the 337-residue chain is Transmembrane protein 120B (337 aa).

Residues 1–39 (MSLERCQSEWTEIEQEYQQLQETHKVYRQKLEELTNLQA) adopt a coiled-coil conformation. 6 helical membrane passes run 100–122 (GLYL…AKFA), 130–150 (FKLY…FLLN), 157–175 (IFNF…RESI), 185–205 (GWWV…LTWP), 268–288 (FLLP…VTLF), and 300–320 (QVFM…LTTL).

The protein belongs to the TMEM120 family.

The protein resides in the nucleus inner membrane. Necessary for efficient adipogenesis. Does not show ion channel activity. This chain is Transmembrane protein 120B (tmem120b), found in Danio rerio (Zebrafish).